Consider the following 1400-residue polypeptide: DNA-directed RNA polymerase subunit beta' (1400 aa).

Zn(2+)-binding residues include Cys-71, Cys-73, Cys-86, and Cys-89. Mg(2+) is bound by residues Asp-462, Asp-464, and Asp-466. Zn(2+) contacts are provided by Cys-811, Cys-885, Cys-892, and Cys-895.

This sequence belongs to the RNA polymerase beta' chain family. As to quaternary structure, the RNAP catalytic core consists of 2 alpha, 1 beta, 1 beta' and 1 omega subunit. When a sigma factor is associated with the core the holoenzyme is formed, which can initiate transcription. The cofactor is Mg(2+). Zn(2+) serves as cofactor.

The enzyme catalyses RNA(n) + a ribonucleoside 5'-triphosphate = RNA(n+1) + diphosphate. Its function is as follows. DNA-dependent RNA polymerase catalyzes the transcription of DNA into RNA using the four ribonucleoside triphosphates as substrates. This Brucella melitensis biotype 1 (strain ATCC 23456 / CCUG 17765 / NCTC 10094 / 16M) protein is DNA-directed RNA polymerase subunit beta'.